The primary structure comprises 445 residues: Rab GDP dissociation inhibitor beta (445 aa).

An N-acetylmethionine modification is found at M1. At K57 the chain carries N6-succinyllysine. K112 is modified (N6-acetyllysine). S130 carries the phosphoserine modification. Residue K269 is modified to N6-acetyllysine. At S382 the chain carries Phosphoserine.

This sequence belongs to the Rab GDI family. Interacts with RHOH. Interacts with the GDP-bound inactive forms of RAB3A, RAB3B, RAB3C, RAB5A, RAB5B, RAB5C, RAB8A, RAB8B, RAB10, RAB12, RAB35, and RAB43; binds RAB3D to a lesser extent. Interacts with DZIP1; this interaction negatively regulates the interaction of GDI2 with GDP-bound RAB8A. As to expression, ubiquitously expressed.

The protein localises to the cytoplasm. It localises to the membrane. Its subcellular location is the golgi apparatus. The protein resides in the trans-Golgi network. GDP-dissociation inhibitor preventing the GDP to GTP exchange of most Rab proteins. By keeping these small GTPases in their inactive GDP-bound form regulates intracellular membrane trafficking. Negatively regulates protein transport to the cilium and ciliogenesis through the inhibition of RAB8A. This is Rab GDP dissociation inhibitor beta (GDI2) from Bos taurus (Bovine).